The sequence spans 471 residues: Glutamate--tRNA ligase 1 (471 aa).

The short motif at 10–20 (PSPTGYLHIGG) is the 'HIGH' region element. 4 residues coordinate Zn(2+): C99, C101, C126, and D128. The 'KMSKS' region motif lies at 238 to 242 (RLSKR). K241 is an ATP binding site.

This sequence belongs to the class-I aminoacyl-tRNA synthetase family. Glutamate--tRNA ligase type 1 subfamily. As to quaternary structure, monomer. The cofactor is Zn(2+).

Its subcellular location is the cytoplasm. It catalyses the reaction tRNA(Glu) + L-glutamate + ATP = L-glutamyl-tRNA(Glu) + AMP + diphosphate. In terms of biological role, catalyzes the attachment of glutamate to tRNA(Glu) in a two-step reaction: glutamate is first activated by ATP to form Glu-AMP and then transferred to the acceptor end of tRNA(Glu). This Alkalilimnicola ehrlichii (strain ATCC BAA-1101 / DSM 17681 / MLHE-1) protein is Glutamate--tRNA ligase 1.